Here is a 150-residue protein sequence, read N- to C-terminus: UPF0178 protein ASA_3749 (150 aa).

The protein belongs to the UPF0178 family.

This Aeromonas salmonicida (strain A449) protein is UPF0178 protein ASA_3749.